Reading from the N-terminus, the 282-residue chain is ADP-ribosyl cyclase/cyclic ADP-ribose hydrolase (282 aa).

Positions 1–24 (MSPVAIIACVCLAVTLTSISPSEA) are cleaved as a signal peptide. 5 cysteine pairs are disulfide-bonded: Cys-39–Cys-58, Cys-75–Cys-155, Cys-136–Cys-149, Cys-230–Cys-251, and Cys-263–Cys-272.

Belongs to the ADP-ribosyl cyclase family. Post-translationally, has different isoforms which may be the result of different amounts of phosphorylation. Immature occoyctes. Oocytes.

Its subcellular location is the cytoplasmic vesicle. It catalyses the reaction NAD(+) = cyclic ADP-beta-D-ribose + nicotinamide + H(+). It carries out the reaction nicotinate + NADP(+) = nicotinate-adenine dinucleotide phosphate + nicotinamide. The catalysed reaction is 2'-phospho-cyclic ADP-ribose + nicotinate = nicotinate-adenine dinucleotide phosphate. Its activity is regulated as follows. Activity is presumably regulated by its sequestration in vesicles before egg fertilization. After fertilization and upon NADase release, it could then be regulated via its potential phosphorylation sites. In terms of biological role, synthesizes cyclic ADP-ribose (cADPR), a second messenger for calcium mobilization from endoplasmic reticulum; ADP-ribose is a minor product. Synthesizes the Ca(2+) mobilizer nicotinate-adenine dinucleotide phosphate from 2'-phospho-cADPR and nicotinic acid as well as from NADP(+) and nicotinic acid; with NADP(+) as substrate preferentially catalyzes NADP(+) hydrolysis rather than NAADP(+) synthesis, about 70-fold better at pH 7.4. Has cADPR hydrolase activity at very high enzyme concentrations, which is probably not physiological. The conversion of NAD(+) into ADP-ribose is also only observed at high enzyme concentrations and results from the hydrolysis of cADP-ribose. The polypeptide is ADP-ribosyl cyclase/cyclic ADP-ribose hydrolase (Aplysia californica (California sea hare)).